We begin with the raw amino-acid sequence, 1043 residues long: Probable inorganic carbon transporter subunit DabA (1043 aa).

Cys460, Asp462, His719, and Cys734 together coordinate Zn(2+).

Belongs to the inorganic carbon transporter (TC 9.A.2) DabA family. Forms a complex with DabB. Zn(2+) is required as a cofactor.

It is found in the cell inner membrane. In terms of biological role, part of an energy-coupled inorganic carbon pump. The polypeptide is Probable inorganic carbon transporter subunit DabA (Thiobacillus denitrificans (strain ATCC 25259 / T1)).